A 595-amino-acid chain; its full sequence is Grainyhead-like protein 3 homolog (595 aa).

Residues 29 to 92 are transcription activation; the sequence is DAWSKYLENP…CDQVKRSCSE (64 aa). A Grh/CP2 DB domain is found at 221 to 454; it reads ANRDFEYTLE…DMETHPVLFI (234 aa). The disordered stretch occupies residues 484–505; the sequence is SSQSFPKGLEAPPSKQQTSEDS.

Belongs to the grh/CP2 family. Grainyhead subfamily.

It is found in the nucleus. Transcription factor playing important roles in primary neurulation and in the differentiation of stratified epithelia of both ectodermal and endodermal origin. Binds directly to the consensus DNA sequence 5'-AACCGGTT-3' acting as an activator and repressor on distinct target genes. In Xenopus laevis (African clawed frog), this protein is Grainyhead-like protein 3 homolog (grhl3).